We begin with the raw amino-acid sequence, 133 residues long: Large ribosomal subunit protein uL16c (133 aa).

Belongs to the universal ribosomal protein uL16 family. As to quaternary structure, part of the 50S ribosomal subunit.

It localises to the plastid. The sequence is that of Large ribosomal subunit protein uL16c from Euglena longa (Euglenophycean alga).